We begin with the raw amino-acid sequence, 265 residues long: MNYFRILYCSVLLFFSFFSCTSAAVSNHPIHWGFQKNNNHQPPDAGKEWNELLNKYGAFYLGDPSKKEIYLTFDNGYENGYTSKILDVLKKHDVHATFFVTGHYLKTAPDLVKRMVKEGHIVGNHSWSHPDMTTISADKIKKELDAVSDKVKELTGQEGTVYVRPPRGIFSERTLALSEKYGYRNIFWSLAFVDWKVNEQKGWRYAYDNIINQIHPGAIILLHTVSKDNADALDEAIKTLKQQGYTFKSLDDLVMEKMFESPFLY.

An N-terminal signal peptide occupies residues 1-23 (MNYFRILYCSVLLFFSFFSCTSA). Positions 67 to 248 (KEIYLTFDNG…TLKQQGYTFK (182 aa)) constitute a NodB homology domain.

Belongs to the polysaccharide deacetylase family.

This is an uncharacterized protein from Geobacillus stearothermophilus (Bacillus stearothermophilus).